The following is a 508-amino-acid chain: MTSTCTNSTRESNSSHTCMPLSKMPISLAHGIIRSTVLVIFLAASFVGNIVLALVLQRKPQLLQVTNRFIFNLLVTDLLQISLVAPWVVATSVPLFWPLNSHFCTALVSLTHLFAFASVNTIVVVSVDRYLSIIHPLSYPSKMTQRRGYLLLYGTWIVAILQSTPPLYGWGQAAFDERNALCSMIWGASPSYTILSVVSFIVIPLIVMIACYSVVFCAARRQHALLYNVKRHSLEVRVKDCVENEDEEGAEKKEEFQDESEFRRQHEGEVKAKEGRMEAKDGSLKAKEGSTGTSESSVEARGSEEVRESSTVASDGSMEGKEGSTKVEENSMKADKGRTEVNQCSIDLGEDDMEFGEDDINFSEDDVEAVNIPESLPPSRRNSNSNPPLPRCYQCKAAKVIFIIIFSYVLSLGPYCFLAVLAVWVDVETQVPQWVITIIIWLFFLQCCIHPYVYGYMHKTIKKEIQDMLKKFFCKEKPPKEDSHPDLPGTEGGTEGKIVPSYDSATFP.

Residues 1 to 35 are Extracellular-facing; sequence MTSTCTNSTRESNSSHTCMPLSKMPISLAHGIIRS. Asparagine 7 and asparagine 13 each carry an N-linked (GlcNAc...) asparagine glycan. The helical transmembrane segment at 36–56 threads the bilayer; the sequence is TVLVIFLAASFVGNIVLALVL. The Cytoplasmic segment spans residues 57-68; it reads QRKPQLLQVTNR. The helical transmembrane segment at 69–89 threads the bilayer; sequence FIFNLLVTDLLQISLVAPWVV. Topologically, residues 90-106 are extracellular; that stretch reads ATSVPLFWPLNSHFCTA. Cysteine 104 and cysteine 182 are disulfide-bonded. A helical membrane pass occupies residues 107–127; the sequence is LVSLTHLFAFASVNTIVVVSV. At 128–149 the chain is on the cytoplasmic side; it reads DRYLSIIHPLSYPSKMTQRRGY. The chain crosses the membrane as a helical span at residues 150-170; it reads LLLYGTWIVAILQSTPPLYGW. Residues 171–196 lie on the Extracellular side of the membrane; the sequence is GQAAFDERNALCSMIWGASPSYTILS. Residues 197–217 traverse the membrane as a helical segment; sequence VVSFIVIPLIVMIACYSVVFC. Topologically, residues 218–399 are cytoplasmic; it reads AARRQHALLY…PRCYQCKAAK (182 aa). The segment at 244–338 is disordered; the sequence is NEDEEGAEKK…ENSMKADKGR (95 aa). 2 stretches are compositionally biased toward basic and acidic residues: residues 250–288 and 318–338; these read AEKKEEFQDESEFRRQHEGEVKAKEGRMEAKDGSLKAKE and MEGKEGSTKVEENSMKADKGR. A helical membrane pass occupies residues 400-420; sequence VIFIIIFSYVLSLGPYCFLAV. Residues 421-433 are Extracellular-facing; it reads LAVWVDVETQVPQ. The chain crosses the membrane as a helical span at residues 434-454; the sequence is WVITIIIWLFFLQCCIHPYVY. Over 455–508 the chain is Cytoplasmic; it reads GYMHKTIKKEIQDMLKKFFCKEKPPKEDSHPDLPGTEGGTEGKIVPSYDSATFP. Positions 476–485 are enriched in basic and acidic residues; the sequence is EKPPKEDSHP. The segment at 476-508 is disordered; the sequence is EKPPKEDSHPDLPGTEGGTEGKIVPSYDSATFP.

It belongs to the G-protein coupled receptor 1 family.

It is found in the cell membrane. In terms of biological role, orphan receptor. The chain is Probable G-protein coupled receptor 101 (GPR101) from Homo sapiens (Human).